Here is a 210-residue protein sequence, read N- to C-terminus: Uracil phosphoribosyltransferase (210 aa).

5-phospho-alpha-D-ribose 1-diphosphate is bound by residues Arg78, Arg103, and 130-138 (DPMLATGGS). Uracil-binding positions include Ile193 and 198 to 200 (GDA). Position 199 (Asp199) interacts with 5-phospho-alpha-D-ribose 1-diphosphate.

The protein belongs to the UPRTase family. The cofactor is Mg(2+).

It catalyses the reaction UMP + diphosphate = 5-phospho-alpha-D-ribose 1-diphosphate + uracil. Its pathway is pyrimidine metabolism; UMP biosynthesis via salvage pathway; UMP from uracil: step 1/1. Allosterically activated by GTP. Functionally, catalyzes the conversion of uracil and 5-phospho-alpha-D-ribose 1-diphosphate (PRPP) to UMP and diphosphate. This chain is Uracil phosphoribosyltransferase, found in Chromobacterium violaceum (strain ATCC 12472 / DSM 30191 / JCM 1249 / CCUG 213 / NBRC 12614 / NCIMB 9131 / NCTC 9757 / MK).